An 89-amino-acid chain; its full sequence is Small ribosomal subunit protein uS14 (89 aa).

This sequence belongs to the universal ribosomal protein uS14 family. As to quaternary structure, part of the 30S ribosomal subunit. Contacts proteins S3 and S10.

Functionally, binds 16S rRNA, required for the assembly of 30S particles and may also be responsible for determining the conformation of the 16S rRNA at the A site. This is Small ribosomal subunit protein uS14 from Chlorobaculum parvum (strain DSM 263 / NCIMB 8327) (Chlorobium vibrioforme subsp. thiosulfatophilum).